A 421-amino-acid polypeptide reads, in one-letter code: MAVDVTEYHLSVIKSPPGWEVGVYAAGALALLGIAAVSLWKLWTSGSFPSPSPFPNYDYRYLQQKYGEAYVEAKLKRVPPWNDQRTTTRGPPSRKGSLSIEDTFESISELGPLELMGRELDLAPYGTLRKSQSADSLNSISSVSNTFGQDFTLGQVEVSMDYDGASHTLHVAVLQGKDLLEREEATFESCFMRVSLLPDEQIVGISRIQRNAYSIFFDEKFSVPLDPTALEEKSLRFSVFGIDEDERNVSTGVVELKLSVLDLPLQPFSGWLYLQDQNKAADAVGEILLSLSYLPTAERLTVVVVKAKNLIWTNEKSTADPFVKVYLLQDGRKMSKKKTAVKRDDPNPVFNEAMIFSVPAIVLQDLSLRVTVAESSSDGRGDNVGHVIIGPGVSGMGTTHWNQMLATLRRPVSMWHPVRRN.

Residues 1 to 18 (MAVDVTEYHLSVIKSPPG) lie on the Vesicular side of the membrane. A helical membrane pass occupies residues 19-39 (WEVGVYAAGALALLGIAAVSL). Topologically, residues 40–421 (WKLWTSGSFP…VSMWHPVRRN (382 aa)) are cytoplasmic. Serine 97 carries the phosphoserine; by PKA modification. Serine 99 and serine 214 each carry phosphoserine. 2 consecutive C2 domains span residues 152-272 (TLGQ…SGWL) and 283-416 (AVGE…SMWH).

The protein belongs to the synaptotagmin family. In terms of assembly, homodimer. Can also form heterodimers. Interacts with SYT1. Post-translationally, phosphorylation of Ser-97 is required for mossy-fiber long-term potentiation. Expressed in the brain, specifically by neurons in the hippocampus, and in the adrenal medulla (at protein level).

It is found in the cytoplasmic vesicle. It localises to the secretory vesicle. Its subcellular location is the synaptic vesicle membrane. Its function is as follows. Synaptic vesicle phosphoprotein that enhances spontaneous neurotransmitter release but does not effect induced neurotransmitter release. Unlike other synaptotagmins, it does not bind Ca(2+) or phospholipids. Essential for mossy-fiber long-term potentiation in the hippocampus. This Mus musculus (Mouse) protein is Synaptotagmin-12.